Reading from the N-terminus, the 419-residue chain is Chalcone synthase D (419 aa).

C164 is a catalytic residue.

The protein belongs to the thiolase-like superfamily. Chalcone/stilbene synthases family.

It carries out the reaction (E)-4-coumaroyl-CoA + 3 malonyl-CoA + 3 H(+) = 2',4,4',6'-tetrahydroxychalcone + 3 CO2 + 4 CoA. Its pathway is secondary metabolite biosynthesis; flavonoid biosynthesis. The primary product of this enzyme is 4,2',4',6'-tetrahydroxychalcone (also termed naringenin-chalcone or chalcone) which can under specific conditions spontaneously isomerize into naringenin. This Petunia hybrida (Petunia) protein is Chalcone synthase D (CHSD).